A 67-amino-acid chain; its full sequence is Large ribosomal subunit protein bL35 (67 aa).

It belongs to the bacterial ribosomal protein bL35 family.

This is Large ribosomal subunit protein bL35 from Novosphingobium aromaticivorans (strain ATCC 700278 / DSM 12444 / CCUG 56034 / CIP 105152 / NBRC 16084 / F199).